Consider the following 132-residue polypeptide: MTMTDPIADMLTRLRNASAAKHETVDMPYSKFKANIAEILKREGYIKDFTAKEAKVGQTLEVTLKYGPNGERSIQGIKRISKPGLRRYAKSDALPMPLGGLGIAIISTSSGLLTQKECLDRGIGGEIVAFVW.

This sequence belongs to the universal ribosomal protein uS8 family. In terms of assembly, part of the 30S ribosomal subunit. Contacts proteins S5 and S12.

Its function is as follows. One of the primary rRNA binding proteins, it binds directly to 16S rRNA central domain where it helps coordinate assembly of the platform of the 30S subunit. The sequence is that of Small ribosomal subunit protein uS8 from Bifidobacterium adolescentis (strain ATCC 15703 / DSM 20083 / NCTC 11814 / E194a).